Reading from the N-terminus, the 501-residue chain is 1-aminocyclopropane-1-carboxylate synthase-like protein 1 (501 aa).

E105 is a substrate binding site. The residue at position 323 (K323) is an N6-(pyridoxal phosphate)lysine. The segment at 480–501 is disordered; it reads GKSQVAEDPRPSQSQEPSDQRR. Positions 490 to 501 are enriched in polar residues; sequence PSQSQEPSDQRR.

This sequence belongs to the class-I pyridoxal-phosphate-dependent aminotransferase family.

Its function is as follows. Does not catalyze the synthesis of 1-aminocyclopropane-1-carboxylate but is capable of catalyzing the deamination of L-vinylglycine. The sequence is that of 1-aminocyclopropane-1-carboxylate synthase-like protein 1 (ACCS) from Homo sapiens (Human).